Reading from the N-terminus, the 471-residue chain is Heat shock 70 kDa protein 13 (471 aa).

An N-terminal signal peptide occupies residues 1–22; the sequence is MAREMTILGSAVLTLLLAGYLA. Basic and acidic residues predominate over residues 315–341; sequence EQDRKEPHSSDTELPKDKLSSADDHRV. The disordered stretch occupies residues 315–352; the sequence is EQDRKEPHSSDTELPKDKLSSADDHRVNSGFGRGLSDK.

It belongs to the heat shock protein 70 family. Binds UBQLN2. Constitutively expressed in all tissues.

Its subcellular location is the microsome. It localises to the endoplasmic reticulum. Has peptide-independent ATPase activity. The protein is Heat shock 70 kDa protein 13 (HSPA13) of Homo sapiens (Human).